The sequence spans 180 residues: DNA replication regulator protein HobA (180 aa).

Residues Glu-17, Glu-27, Glu-140, Glu-143, and Asn-176 each contribute to the Ca(2+) site.

In terms of assembly, forms dimers and homotetramers. Interacts with domains I and II (residues 1-112) of DnaA. In a crystal with domains I and II of DnaA HobA forms tetramers with DnaA fragments bound at the dimer interface of the tetramer. Ca(2+) is required as a cofactor.

Functionally, required for DNA replication initiation. Increases binding of DnaA to oriC region. This is DNA replication regulator protein HobA from Helicobacter pylori (strain ATCC 700392 / 26695) (Campylobacter pylori).